The chain runs to 234 residues: MRLVQLSRHSIAFPSPEGALREPNGLLALGGDLSPARLLMAYQRGIFPWFSPGDPILWWSPDPRAVLWPESLHISRSMKRFHKRSPYRVTMNYAFGQVIEGCASDREEGTWITRGVVEAYHRLHELGHAHSIEVWREDELVGGMYGVAQGTLFCGESMFSRMENASKTALLVLCEEFIGHGGKLIDCQVLNDHTASLGACEIPRRDYLNYLNQMRLGRLPNNFWVPRCLFSPQE.

The protein belongs to the L/F-transferase family.

Its subcellular location is the cytoplasm. The catalysed reaction is N-terminal L-lysyl-[protein] + L-leucyl-tRNA(Leu) = N-terminal L-leucyl-L-lysyl-[protein] + tRNA(Leu) + H(+). It carries out the reaction N-terminal L-arginyl-[protein] + L-leucyl-tRNA(Leu) = N-terminal L-leucyl-L-arginyl-[protein] + tRNA(Leu) + H(+). The enzyme catalyses L-phenylalanyl-tRNA(Phe) + an N-terminal L-alpha-aminoacyl-[protein] = an N-terminal L-phenylalanyl-L-alpha-aminoacyl-[protein] + tRNA(Phe). Its function is as follows. Functions in the N-end rule pathway of protein degradation where it conjugates Leu, Phe and, less efficiently, Met from aminoacyl-tRNAs to the N-termini of proteins containing an N-terminal arginine or lysine. The sequence is that of Leucyl/phenylalanyl-tRNA--protein transferase from Shigella dysenteriae serotype 1 (strain Sd197).